The primary structure comprises 201 residues: Small ribosomal subunit protein uS4c (201 aa).

Residues 15–44 (LGALPGLTSKRPKTGNDLKNQSRSGKKSQY) form a disordered region. An S4 RNA-binding domain is found at 89 to 150 (MRLDNILFRL…EKKSRTLIQN (62 aa)).

The protein belongs to the universal ribosomal protein uS4 family. As to quaternary structure, part of the 30S ribosomal subunit. Contacts protein S5. The interaction surface between S4 and S5 is involved in control of translational fidelity.

It is found in the plastid. Its subcellular location is the chloroplast. In terms of biological role, one of the primary rRNA binding proteins, it binds directly to 16S rRNA where it nucleates assembly of the body of the 30S subunit. Functionally, with S5 and S12 plays an important role in translational accuracy. The sequence is that of Small ribosomal subunit protein uS4c (rps4) from Cucumis sativus (Cucumber).